Consider the following 86-residue polypeptide: Exodeoxyribonuclease 7 small subunit (86 aa).

The interval Met1–Ser26 is disordered.

This sequence belongs to the XseB family. As to quaternary structure, heterooligomer composed of large and small subunits.

It localises to the cytoplasm. The enzyme catalyses Exonucleolytic cleavage in either 5'- to 3'- or 3'- to 5'-direction to yield nucleoside 5'-phosphates.. Its function is as follows. Bidirectionally degrades single-stranded DNA into large acid-insoluble oligonucleotides, which are then degraded further into small acid-soluble oligonucleotides. This Helicobacter pylori (strain Shi470) protein is Exodeoxyribonuclease 7 small subunit.